The sequence spans 552 residues: Membrane protein insertase YidC (552 aa).

Residues 3–23 form a helical membrane-spanning segment; the sequence is TKRLILFVIFSFSILMLWDSW. The tract at residues 29 to 65 is disordered; it reads PPAASQTQTTAQSVEDGSVPQAAKSSASAANQASVPA. The next 4 helical transmembrane spans lie at 359–379, 429–449, 463–483, and 503–523; these read WGVAIILLTILIKLVFYPLSA, LPILVQIPVFIALYWVLLGSV, LSAVDPYYVLPILMGITMIIQ, and PIVFSVFFFFFPAGLVLYWLV.

Belongs to the OXA1/ALB3/YidC family. Type 1 subfamily. As to quaternary structure, interacts with the Sec translocase complex via SecD. Specifically interacts with transmembrane segments of nascent integral membrane proteins during membrane integration.

Its subcellular location is the cell inner membrane. In terms of biological role, required for the insertion and/or proper folding and/or complex formation of integral membrane proteins into the membrane. Involved in integration of membrane proteins that insert both dependently and independently of the Sec translocase complex, as well as at least some lipoproteins. Aids folding of multispanning membrane proteins. The sequence is that of Membrane protein insertase YidC from Methylobacillus flagellatus (strain ATCC 51484 / DSM 6875 / VKM B-1610 / KT).